The sequence spans 469 residues: MDETSPLVSPDRDQTEYSYQSQCSPGATVPLSPNGRFSALPGVVVRIPGTATSCGSAASGPSPPGSPCDQERQPLLERSQTRAAAAQAEREMNKFPDDPAFAEVVKKAEKAIMRDILPERISQGSSGSYFVKDEQGEIIAVFKPKNEEPYGQLNPKWTKWLQKLCCPCCFGRDCLVLNQGYLSEAGASLVDQKLDLNIVPRTKVVFLASETFNYSAIDRVKSRGKRLALEKVPKVGQRFNRIGLPPKVGSFQIFVKSYKDADYWLRRFEADPLPENTNRQLQLQFERLVVLDYIIRNTDRGNDNWLIKYDCPMDSASARDDWVMVKEPVIKIAAIDNGLAFPLKHPDSWRAYPFYWAWLPQAKIQFSQEIKDLILPKISDPNFVKDLEEDLYELFKKDQGFDRGQFRKQIAVMRGQILNLTQAMKDGKSPLQLVQTPPVIVETARSHQKSTSESYTQSFQSRKPFFSWW.

Disordered stretches follow at residues 1–30 (MDET…ATVP) and 50–72 (TATS…DQER). The segment covering 16-25 (EYSYQSQCSP) has biased composition (polar residues). Over residues 50–60 (TATSCGSAASG) the composition is skewed to low complexity. In terms of domain architecture, PI3K/PI4K catalytic spans 115-443 (DILPERISQG…VQTPPVIVET (329 aa)). Positions 121-127 (ISQGSSG) are G-loop. ATP contacts are provided by residues 122–128 (SQGSSGS) and Lys-143. An important for substrate binding region spans residues 148–150 (EPY). An important for interaction with membranes region spans residues 156 to 169 (KWTKWLQKLCCPCC). S-palmitoyl cysteine attachment occurs at residues Cys-165, Cys-166, Cys-168, and Cys-169. Residue 252–255 (QIFV) coordinates ATP. Positions 259–267 (KDADYWLRR) are important for interaction with membranes. The segment at 296–304 (RNTDRGNDN) is catalytic loop. Positions 334-354 (AIDNGLAFPLKHPDSWRAYPF) are activation loop. Asp-336 is a binding site for ATP. An important for interaction with membranes region spans residues 349–358 (WRAYPFYWAW).

The protein belongs to the PI3/PI4-kinase family. Type II PI4K subfamily.

The protein localises to the golgi apparatus. It is found in the trans-Golgi network membrane. It localises to the membrane raft. The protein resides in the endosome. Its subcellular location is the endosome membrane. The protein localises to the cytoplasmic vesicle. It is found in the cell projection. It localises to the dendrite. The protein resides in the presynaptic cell membrane. Its subcellular location is the synapse. The protein localises to the synaptosome. It is found in the mitochondrion. It localises to the membrane. The protein resides in the cell membrane. Its subcellular location is the perikaryon. The protein localises to the neuron projection. It catalyses the reaction a 1,2-diacyl-sn-glycero-3-phospho-(1D-myo-inositol) + ATP = a 1,2-diacyl-sn-glycero-3-phospho-(1D-myo-inositol 4-phosphate) + ADP + H(+). Functionally, membrane-bound phosphatidylinositol-4 kinase (PI4-kinase) that catalyzes the phosphorylation of phosphatidylinositol (PI) to phosphatidylinositol 4-phosphate (PI4P), a lipid that plays important roles in endocytosis, Golgi function, protein sorting and membrane trafficking. Besides, phosphorylation of phosphatidylinositol (PI) to phosphatidylinositol 4-phosphate (PI4P) is the first committed step in the generation of phosphatidylinositol 4,5-bisphosphate (PIP2), a precursor of the second messenger inositol 1,4,5-trisphosphate (InsP3). The sequence is that of Phosphatidylinositol 4-kinase type 2-alpha (pi4k2a) from Xenopus laevis (African clawed frog).